Here is a 160-residue protein sequence, read N- to C-terminus: Troponin C, isoform 2 (160 aa).

EF-hand domains lie at 15-50 (DQIEQFRKYFNMFDKEGKGYIRATQVGQILRTMGQA), 51-86 (FEERDLKQLIKEFDADGSGEIEFEEFAAMVANFVVN), 92-127 (GLEEELREAFRLYDKEGNGYINVSDLRDILRALDDN), and 128-160 (VSEEELDEMIAEIDADGSGTVDFDEFMEMMSGE). Residues Asp64, Asp66, Ser68, Glu70, and Glu75 each coordinate Ca(2+). 5 residues coordinate Ca(2+): Asp141, Asp143, Ser145, Thr147, and Glu152.

The protein belongs to the troponin C family. As to expression, pharyngeal muscle.

In Caenorhabditis elegans, this protein is Troponin C, isoform 2 (tnc-2).